A 121-amino-acid chain; its full sequence is Holo-[acyl-carrier-protein] synthase (121 aa).

Residues Asp-8 and Glu-58 each coordinate Mg(2+).

The protein belongs to the P-Pant transferase superfamily. AcpS family. Mg(2+) is required as a cofactor.

The protein localises to the cytoplasm. It catalyses the reaction apo-[ACP] + CoA = holo-[ACP] + adenosine 3',5'-bisphosphate + H(+). Transfers the 4'-phosphopantetheine moiety from coenzyme A to a Ser of acyl-carrier-protein. The protein is Holo-[acyl-carrier-protein] synthase of Bacillus pumilus (strain SAFR-032).